The chain runs to 221 residues: Large ribosomal subunit protein uL16A (221 aa).

It belongs to the universal ribosomal protein uL16 family. As to quaternary structure, component of the large ribosomal subunit (LSU). Mature yeast ribosomes consist of a small (40S) and a large (60S) subunit. The 40S small subunit contains 1 molecule of ribosomal RNA (18S rRNA) and at least 33 different proteins. The large 60S subunit contains 3 rRNA molecules (25S, 5.8S and 5S rRNA) and at least 46 different proteins.

Its subcellular location is the cytoplasm. In terms of biological role, component of the ribosome, a large ribonucleoprotein complex responsible for the synthesis of proteins in the cell. The small ribosomal subunit (SSU) binds messenger RNAs (mRNAs) and translates the encoded message by selecting cognate aminoacyl-transfer RNA (tRNA) molecules. The large subunit (LSU) contains the ribosomal catalytic site termed the peptidyl transferase center (PTC), which catalyzes the formation of peptide bonds, thereby polymerizing the amino acids delivered by tRNAs into a polypeptide chain. The nascent polypeptides leave the ribosome through a tunnel in the LSU and interact with protein factors that function in enzymatic processing, targeting, and the membrane insertion of nascent chains at the exit of the ribosomal tunnel. This is Large ribosomal subunit protein uL16A (rpl1001) from Schizosaccharomyces pombe (strain 972 / ATCC 24843) (Fission yeast).